The chain runs to 448 residues: MLHRYLPMTEEDKQEMLKTIGVASIDELFADIPEQVRFRGELNVKRAKSEPELWKELSALADKNANARQYVSFLGAGVYDHYIPAVVDHVLMRSEFYTAYTPYQPEISQGELQAIFEFQTMVCELTGMDVANSSMYDGGTALAEAVLLSAAHTKRRKVLISNAVHPQYREVVRTYANGQRLEVKEIPYNGGVTDLEVLAAEMGDDVACVVIQYPNFFGQIEPLKAIEPLVHEKKSLFVVASNPLALGVLTPPGEFGADIVVGDMQPFGIPMQFGGPHCGYFAVKAPLMRKIPGRLVGQTTDEEGRRGFVLTLQAREQHIRRDKATSNICSNQALNALAASVALSALGKRGVKEMATMNMQKAHYAKSELQKRGLLSPFAGPFFNEFVIRLNQPVDDVNARLRQKGIIGGYNLGFDYPELANHMLVAVTELRTKEEIDRFVNELGDGHA.

Belongs to the GcvP family. N-terminal subunit subfamily. As to quaternary structure, the glycine cleavage system is composed of four proteins: P, T, L and H. In this organism, the P 'protein' is a heterodimer of two subunits.

The enzyme catalyses N(6)-[(R)-lipoyl]-L-lysyl-[glycine-cleavage complex H protein] + glycine + H(+) = N(6)-[(R)-S(8)-aminomethyldihydrolipoyl]-L-lysyl-[glycine-cleavage complex H protein] + CO2. In terms of biological role, the glycine cleavage system catalyzes the degradation of glycine. The P protein binds the alpha-amino group of glycine through its pyridoxal phosphate cofactor; CO(2) is released and the remaining methylamine moiety is then transferred to the lipoamide cofactor of the H protein. This chain is Probable glycine dehydrogenase (decarboxylating) subunit 1, found in Geobacillus thermodenitrificans (strain NG80-2).